A 54-amino-acid polypeptide reads, in one-letter code: Ribulose bisphosphate carboxylase large chain (54 aa).

A propeptide spanning residues 1–2 (MS) is cleaved from the precursor. Proline 3 is subject to N-acetylproline. Residue lysine 14 is modified to N6,N6,N6-trimethyllysine.

Belongs to the RuBisCO large chain family. Type I subfamily. As to quaternary structure, heterohexadecamer of 8 large chains and 8 small chains.

Its subcellular location is the plastid. It localises to the chloroplast. It catalyses the reaction 2 (2R)-3-phosphoglycerate + 2 H(+) = D-ribulose 1,5-bisphosphate + CO2 + H2O. It carries out the reaction D-ribulose 1,5-bisphosphate + O2 = 2-phosphoglycolate + (2R)-3-phosphoglycerate + 2 H(+). Its function is as follows. RuBisCO catalyzes two reactions: the carboxylation of D-ribulose 1,5-bisphosphate, the primary event in carbon dioxide fixation, as well as the oxidative fragmentation of the pentose substrate in the photorespiration process. Both reactions occur simultaneously and in competition at the same active site. In Ilex ciliospinosa (Sichuan holly), this protein is Ribulose bisphosphate carboxylase large chain (rbcL).